Here is a 207-residue protein sequence, read N- to C-terminus: Killer cell lectin-like receptor subfamily F member 2 (207 aa).

Residues 1 to 30 are Cytoplasmic-facing; sequence MENEDGYMTLSFKNRCKSKQKSKDFSLYPQ. The residue at position 7 (Tyr-7) is a Phosphotyrosine. The chain crosses the membrane as a helical; Signal-anchor for type II membrane protein span at residues 31 to 51; that stretch reads YYCLLLIFGCIVILIFIMTGI. Residues 52–207 lie on the Extracellular side of the membrane; that stretch reads DLKFWHKKMD…ILTHNGTSGV (156 aa). Residue Asn-67 is glycosylated (N-linked (GlcNAc...) asparagine). Disulfide bonds link Cys-78-Cys-89, Cys-106-Cys-193, and Cys-172-Cys-185. In terms of domain architecture, C-type lectin spans 85 to 194; that stretch reads NEGKCYWFST…CSSTFKGICQ (110 aa). An N-linked (GlcNAc...) asparagine glycan is attached at Asn-202.

As to quaternary structure, homodimer; non-disulfide-linked. Interacts with CLEC2A. N-glycosylated.

The protein localises to the cell membrane. Its function is as follows. C-type lectin-like receptor involved in natural killer cell mediated cytotoxicity and cytokine secretion in keratinocytes via its interaction with CLEC2A. Triggers degranulation in a SYK-dependent manner and stimulates SYK phosphotyrosinylation without recruiting SYK directly. The chain is Killer cell lectin-like receptor subfamily F member 2 (KLRF2) from Homo sapiens (Human).